Reading from the N-terminus, the 266-residue chain is Small ribosomal subunit protein eS1 (266 aa).

Residues Glu234 to Val266 form a disordered region. Residues Thr244 to Gly257 are compositionally biased toward basic and acidic residues.

The protein belongs to the eukaryotic ribosomal protein eS1 family. Component of the small ribosomal subunit. Mature ribosomes consist of a small (40S) and a large (60S) subunit. The 40S subunit contains about 33 different proteins and 1 molecule of RNA (18S). The 60S subunit contains about 49 different proteins and 3 molecules of RNA (28S, 5.8S and 5S). Part of the small subunit (SSU) processome, composed of more than 70 proteins and the RNA chaperone small nucleolar RNA (snoRNA) U3.

It is found in the cytoplasm. The protein localises to the nucleus. It localises to the nucleolus. Its function is as follows. Component of the small ribosomal subunit. The ribosome is a large ribonucleoprotein complex responsible for the synthesis of proteins in the cell. Part of the small subunit (SSU) processome, first precursor of the small eukaryotic ribosomal subunit. During the assembly of the SSU processome in the nucleolus, many ribosome biogenesis factors, an RNA chaperone and ribosomal proteins associate with the nascent pre-rRNA and work in concert to generate RNA folding, modifications, rearrangements and cleavage as well as targeted degradation of pre-ribosomal RNA by the RNA exosome. May play a role during erythropoiesis. The protein is Small ribosomal subunit protein eS1 (rps3a) of Solea senegalensis (Senegalese sole).